Consider the following 111-residue polypeptide: Ribosome-binding factor A (111 aa).

The protein belongs to the RbfA family. In terms of assembly, monomer. Binds 30S ribosomal subunits, but not 50S ribosomal subunits or 70S ribosomes.

Its subcellular location is the cytoplasm. In terms of biological role, one of several proteins that assist in the late maturation steps of the functional core of the 30S ribosomal subunit. Associates with free 30S ribosomal subunits (but not with 30S subunits that are part of 70S ribosomes or polysomes). Required for efficient processing of 16S rRNA. May interact with the 5'-terminal helix region of 16S rRNA. This Helicobacter pylori (strain Shi470) protein is Ribosome-binding factor A.